A 246-amino-acid polypeptide reads, in one-letter code: Transcription factor A, mitochondrial (246 aa).

The N-terminal 42 residues, 1–42, are a transit peptide targeting the mitochondrion; it reads MALLRGVWGVLSALGKSGADLCAVCGSRLRSPFSFAYVPRWF. Residues 50 to 118 constitute a DNA-binding region (HMG box 1); the sequence is PKKPMTSYVR…VYKEEVNRIQ (69 aa). Phosphoserine; by PKA is present on residues Ser56 and Ser61. Thr122 is subject to Phosphothreonine. A DNA-binding region (HMG box 2) is located at residues 155–219; it reads PKRPRSAYNI…RYYNEMKSWE (65 aa). Residue Ser160 is modified to Phosphoserine; by PKA. Residues Ser193 and Ser195 each carry the phosphoserine modification.

Monomer; binds DNA as a monomer. Homodimer. Component of the mitochondrial transcription initiation complex, composed at least of TFB2M, TFAM and POLRMT. In this complex TFAM recruits POLRMT to the promoter whereas TFB2M induces structural changes in POLRMT to enable promoter opening and trapping of the DNA non-template strand. Upon metabolic stress, forms a complex composed of FOXO3, SIRT3, TFAM and POLRMT. Interacts with TFB1M and TFB2M. Interacts with CLPX; this enhances DNA-binding. Phosphorylation by PKA within the HMG box 1 impairs DNA binding and promotes degradation by the AAA+ Lon protease.

The protein localises to the mitochondrion. It localises to the mitochondrion matrix. The protein resides in the mitochondrion nucleoid. Its function is as follows. Binds to the mitochondrial light strand promoter and functions in mitochondrial transcription regulation. Component of the mitochondrial transcription initiation complex, composed at least of TFB2M, TFAM and POLRMT that is required for basal transcription of mitochondrial DNA. In this complex, TFAM recruits POLRMT to a specific promoter whereas TFB2M induces structural changes in POLRMT to enable promoter opening and trapping of the DNA non-template strand. Required for accurate and efficient promoter recognition by the mitochondrial RNA polymerase. Promotes transcription initiation from the HSP1 and the light strand promoter by binding immediately upstream of transcriptional start sites. Is able to unwind DNA. Bends the mitochondrial light strand promoter DNA into a U-turn shape via its HMG boxes. Required for maintenance of normal levels of mitochondrial DNA. May play a role in organizing and compacting mitochondrial DNA. The sequence is that of Transcription factor A, mitochondrial from Sus scrofa (Pig).